The chain runs to 431 residues: Trigger factor (431 aa).

A PPIase FKBP-type domain is found at glycine 165–proline 250.

It belongs to the FKBP-type PPIase family. Tig subfamily.

It is found in the cytoplasm. The enzyme catalyses [protein]-peptidylproline (omega=180) = [protein]-peptidylproline (omega=0). Functionally, involved in protein export. Acts as a chaperone by maintaining the newly synthesized protein in an open conformation. Functions as a peptidyl-prolyl cis-trans isomerase. In Leuconostoc citreum (strain KM20), this protein is Trigger factor.